Reading from the N-terminus, the 120-residue chain is Putative gamma-glutamylcyclotransferase MJ1514 (120 aa).

7–10 (YGSL) serves as a coordination point for substrate. Catalysis depends on Glu74, which acts as the Proton acceptor.

Belongs to the gamma-glutamylcyclotransferase family.

In terms of biological role, putative gamma-glutamylcyclotransferase. The protein is Putative gamma-glutamylcyclotransferase MJ1514 of Methanocaldococcus jannaschii (strain ATCC 43067 / DSM 2661 / JAL-1 / JCM 10045 / NBRC 100440) (Methanococcus jannaschii).